Here is a 141-residue protein sequence, read N- to C-terminus: UPF0179 protein Cmaq_1008 (141 aa).

This sequence belongs to the UPF0179 family.

The chain is UPF0179 protein Cmaq_1008 from Caldivirga maquilingensis (strain ATCC 700844 / DSM 13496 / JCM 10307 / IC-167).